A 229-amino-acid chain; its full sequence is Cytochrome c oxidase subunit 2 (229 aa).

Residues methionine 1–histidine 26 lie on the Mitochondrial intermembrane side of the membrane. The helical transmembrane segment at alanine 27 to asparagine 48 threads the bilayer. Residues serine 49–glutamate 62 lie on the Mitochondrial matrix side of the membrane. The chain crosses the membrane as a helical span at residues methionine 63–arginine 82. Topologically, residues leucine 83 to serine 229 are mitochondrial intermembrane. 6 residues coordinate Cu cation: histidine 161, cysteine 196, glutamate 198, cysteine 200, histidine 204, and methionine 207. Glutamate 198 lines the Mg(2+) pocket.

It belongs to the cytochrome c oxidase subunit 2 family. As to quaternary structure, component of the cytochrome c oxidase (complex IV, CIV), a multisubunit enzyme composed of a catalytic core of 3 subunits and several supernumerary subunits. The complex exists as a monomer or a dimer and forms supercomplexes (SCs) in the inner mitochondrial membrane with ubiquinol-cytochrome c oxidoreductase (cytochrome b-c1 complex, complex III, CIII). Requires Cu cation as cofactor.

The protein localises to the mitochondrion inner membrane. The catalysed reaction is 4 Fe(II)-[cytochrome c] + O2 + 8 H(+)(in) = 4 Fe(III)-[cytochrome c] + 2 H2O + 4 H(+)(out). Its function is as follows. Component of the cytochrome c oxidase, the last enzyme in the mitochondrial electron transport chain which drives oxidative phosphorylation. The respiratory chain contains 3 multisubunit complexes succinate dehydrogenase (complex II, CII), ubiquinol-cytochrome c oxidoreductase (cytochrome b-c1 complex, complex III, CIII) and cytochrome c oxidase (complex IV, CIV), that cooperate to transfer electrons derived from NADH and succinate to molecular oxygen, creating an electrochemical gradient over the inner membrane that drives transmembrane transport and the ATP synthase. Cytochrome c oxidase is the component of the respiratory chain that catalyzes the reduction of oxygen to water. Electrons originating from reduced cytochrome c in the intermembrane space (IMS) are transferred via the dinuclear copper A center (CU(A)) of subunit 2 and heme A of subunit 1 to the active site in subunit 1, a binuclear center (BNC) formed by heme A3 and copper B (CU(B)). The BNC reduces molecular oxygen to 2 water molecules using 4 electrons from cytochrome c in the IMS and 4 protons from the mitochondrial matrix. The chain is Cytochrome c oxidase subunit 2 (mt:CoII) from Drosophila bifasciata (Fruit fly).